Consider the following 307-residue polypeptide: MAKEGTKVPRIKLGSQGLEVSAQGLGCMGMSAFYGPPKPEPDMIQLIHHAINSGITLLDTSDVYGPHTNEILLGKALKGGTRERVVLATKFGIVLGDEKKAEGKRAVHGDPAYVRAACEASLKRLDIDCIDLYYQHRVDTRVPIEITVGELKKLVEEGKLKYIGLSEASASTIRRAHAVHPITAVQLEWSLWSRDVEEEIIPTCRELGIGIVAYSPLGRGFLSSGPKLLEDMSNEDYRKYLPRFQAENLENNKNLYERICEMAVRKGCTPSQLALAWVHHQGNDVCPIPGTTKIENLNQNMKPCPSS.

The active-site Proton donor is Tyr-64. His-136 is a binding site for substrate. Residue 215–225 (SPLGRGFLSSG) coordinates NADP(+).

This sequence belongs to the aldo/keto reductase family. Aldo/keto reductase 2 subfamily.

The polypeptide is Auxin-induced protein PCNT115 (Nicotiana tabacum (Common tobacco)).